Consider the following 296-residue polypeptide: Ribosomal protein L11 methyltransferase (296 aa).

Threonine 139, glycine 163, aspartate 185, and asparagine 232 together coordinate S-adenosyl-L-methionine.

The protein belongs to the methyltransferase superfamily. PrmA family.

Its subcellular location is the cytoplasm. It carries out the reaction L-lysyl-[protein] + 3 S-adenosyl-L-methionine = N(6),N(6),N(6)-trimethyl-L-lysyl-[protein] + 3 S-adenosyl-L-homocysteine + 3 H(+). Methylates ribosomal protein L11. The chain is Ribosomal protein L11 methyltransferase from Picosynechococcus sp. (strain ATCC 27264 / PCC 7002 / PR-6) (Agmenellum quadruplicatum).